We begin with the raw amino-acid sequence, 103 residues long: Preprofallaxidin-6 (103 aa).

Positions 1 to 22 are cleaved as a signal peptide; it reads MASLKKSLFLVLFLGFVSLSIC. The propeptide occupies 23-49; that stretch reads EEEKRENEGNENEEEDENHEEGSEEKR. The interval 24-50 is disordered; sequence EEKRENEGNENEEEDENHEEGSEEKRG. Positions 31-41 are enriched in acidic residues; sequence GNENEEEDENH. At L65 the chain carries Leucine amide. The segment at 67–103 is disordered; the sequence is KRSEEKRYHPFGKRSEEKRYHPFGKRSEEKRYPPIGK. Positions 69 to 73 are excised as a propeptide; it reads SEEKR. F77 bears the Phenylalanine amide mark. Positions 81–85 are excised as a propeptide; it reads SEEKR. The residue at position 89 (F89) is a Phenylalanine amide. The propeptide occupies 93 to 97; sequence SEEKR. I101 bears the Isoleucine amide mark.

This sequence belongs to the frog skin active peptide (FSAP) family. Brevinin subfamily. Expressed by the skin glands.

Its subcellular location is the secreted. Functionally, fallaxidin-1.3 shows no antibacterial activity against Gram-positive or Gram-negative bacteria. Does not inhibit the formation of NO by neuronal nitric oxide synthase. Has no effect on splenocyte proliferation or smooth muscle contraction. Its function is as follows. Fallaxidin-1.4 shows no antibacterial activity against Gram-positive or Gram-negative bacteria. Does not inhibit the formation of NO by neuronal nitric oxide synthase. Has no effect on splenocyte proliferation or smooth muscle contraction. Fallaxidin-3.1 shows antibacterial activity against the Gram-positive bacteria E.faecalis (MIC=100 uM) and L.lactis (MIC=100 uM). No antibacterial activity against the Gram-positive bacteria B.cereus, L.innocua, M.luteus, S.epidermidis, S.uberis and S.aureus, or the Gram-negative bacteria E.cloacae and E.coli. This Litoria fallax (Eastern dwarf tree frog) protein is Preprofallaxidin-6.